The following is a 2452-amino-acid chain: Lovastatin diketide synthase lovF (2452 aa).

The 372-residue stretch at 10–381 folds into the Ketosynthase family 3 (KS3) domain; the sequence is PAPIAVVGMG…GANAHAIVER (372 aa). Catalysis depends on for beta-ketoacyl synthase activity residues Cys173, His308, and His343. Residues 496-790 form a malonyl-CoA:ACP transacylase (MAT) domain region; that stretch reads VFTGQGAQWF…PYLSCLSRGK (295 aa). Ser555 serves as the catalytic For malonyltransferase activity. The tract at residues 861–998 is N-terminal hotdog fold; the sequence is HDLIGLQEPL…GLVRVDMDQP (138 aa). A dehydratase (DH) domain region spans residues 861–1166; the sequence is HDLIGLQEPL…LEGLVFQSLG (306 aa). The 311-residue stretch at 861 to 1171 folds into the PKS/mFAS DH domain; the sequence is HDLIGLQEPL…FQSLGASLGT (311 aa). His893 acts as the Proton acceptor; for dehydratase activity in catalysis. Residues 997-1017 are disordered; sequence QPASSLSNPQRADPRPWSRKT. The C-terminal hotdog fold stretch occupies residues 1012-1171; sequence PWSRKTAPQD…FQSLGASLGT (160 aa). Asp1079 functions as the Proton donor; for dehydratase activity in the catalytic mechanism. The interval 1343-1528 is methyltransferase (CMet) domain; it reads ELVRLCCHKN…RDCDSDEFYM (186 aa). Positions 1745–2064 are enoylreductase (ER) domain; the sequence is GLLDSLYFRK…SGQHVGKIVV (320 aa). The interval 2088–2260 is ketoreductase (KR) domain; that stretch reads SYLVAGGLGG…AVTIDLGMVQ (173 aa). In terms of domain architecture, Carrier spans 2373 to 2450; the sequence is ASIAVIMEAM…KVAEVVLQRY (78 aa). Ser2410 carries the post-translational modification O-(pantetheine 4'-phosphoryl)serine.

As to quaternary structure, interacts with LovD. Requires pantetheine 4'-phosphate as cofactor.

It carries out the reaction holo-[2-methylbutanoate polyketide synthase] + 2 malonyl-CoA + S-adenosyl-L-methionine + 2 NADPH + 3 H(+) = (S)-2-methylbutanoyl-[2-methylbutanoate polyketide synthase] + S-adenosyl-L-homocysteine + 2 CO2 + 2 NADP(+) + 2 CoA + H2O. It participates in polyketide biosynthesis; lovastatin biosynthesis. In terms of biological role, lovastatin diketide synthase; part of the gene cluster that mediates the biosynthesis of lovastatin (also known as mevinolin, mevacor or monacolin K), a hypolipidemic inhibitor of (3S)-hydroxymethylglutaryl-coenzyme A (HMG-CoA) reductase (HMGR). The first step in the biosynthesis of lovastatin is the production of dihydromonacolin L acid by the lovastatin nonaketide synthase lovB and the trans-acting enoyl reductase lovC via condensation of one acetyl-CoA unit and 8 malonyl-CoA units. Dihydromonacolin L acid is released from lovB by the thioesterase lovG. Next, dihydromonacolin L acid is oxidized by the dihydromonacolin L monooxygenase lovA twice to form monacolin J acid. The 2-methylbutyrate moiety of lovastatin is synthesized by the lovastatin diketide synthase lovF via condensation of one acetyl-CoA unit and one malonyl-CoA unit. Finally, the covalent attachment of this moiety to monacolin J acid is catalyzed by the transesterase lovD to yield lovastatin. LovD has broad substrate specificity and can also convert monacolin J to simvastatin using alpha-dimethylbutanoyl-S-methyl-3-mercaptopropionate (DMB-S-MMP) as the thioester acyl donor, and can also catalyze the reverse reaction and function as hydrolase in vitro. LovD has much higher activity with LovF-bound 2-methylbutanoate than with free diketide substrates. The sequence is that of Lovastatin diketide synthase lovF from Aspergillus terreus (strain NIH 2624 / FGSC A1156).